The chain runs to 426 residues: Gamma-glutamyl phosphate reductase (426 aa).

This sequence belongs to the gamma-glutamyl phosphate reductase family.

It is found in the cytoplasm. The enzyme catalyses L-glutamate 5-semialdehyde + phosphate + NADP(+) = L-glutamyl 5-phosphate + NADPH + H(+). The protein operates within amino-acid biosynthesis; L-proline biosynthesis; L-glutamate 5-semialdehyde from L-glutamate: step 2/2. In terms of biological role, catalyzes the NADPH-dependent reduction of L-glutamate 5-phosphate into L-glutamate 5-semialdehyde and phosphate. The product spontaneously undergoes cyclization to form 1-pyrroline-5-carboxylate. This chain is Gamma-glutamyl phosphate reductase, found in Paracidovorax citrulli (strain AAC00-1) (Acidovorax citrulli).